Reading from the N-terminus, the 111-residue chain is Probable 4-amino-4-deoxy-L-arabinose-phosphoundecaprenol flippase subunit ArnE (111 aa).

3 consecutive transmembrane segments (helical) span residues 38–58, 61–81, and 91–111; these read LWLG…LLVL, LPVG…TLAA, and PRHW…GSAA. In terms of domain architecture, EamA spans 40–109; that stretch reads LGLALICMGA…IISGIIILGS (70 aa).

Belongs to the ArnE family. In terms of assembly, heterodimer of ArnE and ArnF.

It localises to the cell inner membrane. The protein operates within bacterial outer membrane biogenesis; lipopolysaccharide biosynthesis. In terms of biological role, translocates 4-amino-4-deoxy-L-arabinose-phosphoundecaprenol (alpha-L-Ara4N-phosphoundecaprenol) from the cytoplasmic to the periplasmic side of the inner membrane. This chain is Probable 4-amino-4-deoxy-L-arabinose-phosphoundecaprenol flippase subunit ArnE, found in Salmonella choleraesuis (strain SC-B67).